Consider the following 350-residue polypeptide: Biotin synthase (350 aa).

The Radical SAM core domain occupies 38–256 (NHVQVSTLLS…IAIARIMMPQ (219 aa)). Positions 53, 57, and 60 each coordinate [4Fe-4S] cluster. [2Fe-2S] cluster is bound by residues cysteine 97, cysteine 128, cysteine 188, and arginine 260.

The protein belongs to the radical SAM superfamily. Biotin synthase family. As to quaternary structure, homodimer. It depends on [4Fe-4S] cluster as a cofactor. [2Fe-2S] cluster serves as cofactor.

It carries out the reaction (4R,5S)-dethiobiotin + (sulfur carrier)-SH + 2 reduced [2Fe-2S]-[ferredoxin] + 2 S-adenosyl-L-methionine = (sulfur carrier)-H + biotin + 2 5'-deoxyadenosine + 2 L-methionine + 2 oxidized [2Fe-2S]-[ferredoxin]. It functions in the pathway cofactor biosynthesis; biotin biosynthesis; biotin from 7,8-diaminononanoate: step 2/2. In terms of biological role, catalyzes the conversion of dethiobiotin (DTB) to biotin by the insertion of a sulfur atom into dethiobiotin via a radical-based mechanism. This chain is Biotin synthase, found in Vibrio parahaemolyticus serotype O3:K6 (strain RIMD 2210633).